Here is a 1036-residue protein sequence, read N- to C-terminus: MMKFRFRRQGADPQREKLKQELFAFHKTVEHGFPNQPSALAFDPELRIMAIGTRSGAVKIYGAPGVEFTGLHRDAATVTQMHFLPGQGRLLTLLDDSSLHLWEIIHHNGCAHLEEGLSFHPPSRPSFDNASFPASLTRVTVVLLVAGNTAALGTESGSIFFLDVATLALLEGQTLSPDVVLRSVPDDYRCGKALGPVESLQGHLQDPSKILIGYSRGLLVIWSQATQSVDNVFLGNQQLESLCWGRDGSSIISSHSDGSYAIWSTDTGSPPTLQPTVVTTPYGPFPCKAINKILWRSCESGDHFIIFSGGMPRASYGDRHCVSVLRAETLVTLDFTSRVIDFFTVHSTQPEDECDNPQALAVLLEEELVVLDLQTPGWPAVPAPYLAPLHSSAITCSAHVANVPSKLWARIVSAGEQQSPQPASSALSWPITGGRNLAQEPSQRGLLLTGHEDGTVRFWDASGVALRPLYKLSTAGLFQTDCEHADSLAQAVEDDWPPFRKVGCFDPYSDDPRLGIQKVALCKYTAQMVVAGTAGQVLVLELSEVPAEHAVSVANVDLLQDREGFTWKGHERLNPHTGLLPWPAGFQPRMLIQCLPPAAVTAVTLHAEWSLVAFGTSHGFGLFDYQRKSPVLARCTLHPNDSLAMEGPLSRVKSLKKSLRQSFRRIRKSRVSGKKRTPAASSKLQEANAQLAEQTCPHDLEMTPVQRRIEPRSADDSLSGVVRCLYFADTFLRDATHHGPTMWAGTNSGSVFAYALEVPAATAGGEKRPEQAVEAVLGKEVQLMHRAPVVAIAVLDGRGRPLPEPYEASRDLAQAPDMQGGHAVLIASEEQFKVFTLPKVSAKTKFKLTAHEGCRVRKVALATFASVMSEDYAETCLACLTNLGDVHVFSVPGLRPQVHYSCIRKEDISGIASCVFTRHGQGFYLISPSEFERFSLSARNITEPLCSLDISWPQNATQPRLQESPKLSQANGTRDIILAPESCEGSPSSAHSKRADTMEPPEAALSPVSIDSAASGDTMLDTTGDVTVEYVKDFLG.

WD repeat units lie at residues 38 to 71 (SALA…FTGL), 78 to 119 (VTQM…GLSF), 139 to 175 (VTVV…GQTL), 199 to 233 (SLQG…DNVF), 239 to 271 (LESL…GSPP), 289 to 331 (AINK…ETLV), 339 to 373 (VIDF…VLDL), 395 to 473 (TCSA…YKLS), 517 to 592 (QKVA…RMLI), and 601 to 662 (TAVT…LRQS). Phosphoserine is present on Ser-662. Residues 667-677 (RKSRVSGKKRT) show a composition bias toward basic residues. The interval 667-688 (RKSRVSGKKRTPAASSKLQEAN) is disordered. The segment covering 679–688 (AASSKLQEAN) has biased composition (polar residues). WD repeat units follow at residues 722–782 (VRCL…KEVQ), 791–843 (AIAV…VSAK), 848–901 (LTAH…VHYS), and 915–938 (VFTR…SLSA). Thr-957 is subject to Phosphothreonine. A phosphoserine mark is found at Ser-964, Ser-982, and Ser-989. The tract at residues 980-1002 (PESCEGSPSSAHSKRADTMEPPE) is disordered.

This sequence belongs to the WD repeat L(2)GL family. Associated with nonmuscle myosin II heavy chain. Interacts with PRKCI/aPKC, PARD6B/Par-6 and PARD6A. Interacts with STX4A. Interacts with RAB10 (GDP-bound form); the interaction is direct and promotes RAB10 association with membranes and activation through competition with the Rab inhibitor GDI1. Interacts with DCAF1. In terms of processing, phosphorylated by PRKCI on at least one of the following Ser residues: Ser 654, Ser-658, Ser-662, Ser-669 and Ser-672. Phosphorylation is important for appropriated cell polarization.

It is found in the early endosome membrane. Its subcellular location is the golgi apparatus. The protein resides in the trans-Golgi network membrane. It localises to the golgi apparatus membrane. The protein localises to the cell projection. It is found in the axon. Its subcellular location is the cytoplasm. The protein resides in the cytoskeleton. Cortical cytoskeleton protein found in a complex involved in maintaining cell polarity and epithelial integrity. Involved in the regulation of mitotic spindle orientation, proliferation, differentiation and tissue organization of neuroepithelial cells. Involved in axonogenesis through RAB10 activation thereby regulating vesicular membrane trafficking toward the axonal plasma membrane. The polypeptide is Lethal(2) giant larvae protein homolog 1 (Llgl1) (Mus musculus (Mouse)).